A 200-amino-acid polypeptide reads, in one-letter code: Ubiquinol-cytochrome-c reductase complex assembly factor 1 (200 aa).

It belongs to the CBP3 family.

The protein localises to the mitochondrion inner membrane. Its function is as follows. Required for the assembly of the ubiquinol-cytochrome c reductase complex (mitochondrial respiratory chain complex III or cytochrome b-c1 complex). May be involved in cytochrome b translation and/or stability. This Xenopus laevis (African clawed frog) protein is Ubiquinol-cytochrome-c reductase complex assembly factor 1 (uqcc1).